The sequence spans 78 residues: U7-lycotoxin-Ls1h (78 aa).

The first 22 residues, 1-22 (MKLIIFTGLTLLLIVSLIDVEA), serve as a signal peptide directing secretion. A propeptide spanning residues 23 to 26 (QNEG) is cleaved from the precursor.

It belongs to the neurotoxin 19 (CSTX) family. 07 (U7-Lctx) subfamily. Post-translationally, contains 4 disulfide bonds. As to expression, expressed by the venom gland.

The protein resides in the secreted. This Lycosa singoriensis (Wolf spider) protein is U7-lycotoxin-Ls1h.